The sequence spans 314 residues: Olfactory receptor 5D13 (314 aa).

Residues 1–27 are Extracellular-facing; sequence MMASERNQSSTPTFILLGFSEYPEIQV. An N-linked (GlcNAc...) asparagine glycan is attached at asparagine 7. Residues 28–48 traverse the membrane as a helical segment; that stretch reads PLFLVFLFVYTVTVVGNLGMI. The Cytoplasmic portion of the chain corresponds to 49-56; that stretch reads IIIRLNSK. The chain crosses the membrane as a helical span at residues 57–77; the sequence is LHTIMCFFLSHLSLTDFCFST. Over 78 to 101 the chain is Extracellular; sequence VVTPKLLENLVVEYRTISFSGCIM. Residues 102–122 form a helical membrane-spanning segment; it reads QFCFACIFGVTETFMLAAMAY. The Cytoplasmic portion of the chain corresponds to 123–141; that stretch reads DRFVAVCKPLLYTTIMSQK. Residues 142-162 traverse the membrane as a helical segment; sequence LCALLVAGSYTWGIVCSLILT. Residues 163–198 lie on the Extracellular side of the membrane; that stretch reads YFLLDLSFCESTFINNFICDHSVIVSASYSDPYISQ. Residues 199-219 traverse the membrane as a helical segment; sequence RLCFIIAIFNEVSSLIIILTS. The Cytoplasmic portion of the chain corresponds to 220–239; the sequence is YMLIFTTIMKMRSASGRQKT. Residues 240–260 traverse the membrane as a helical segment; sequence FSTCASHLTAITIFHGTILFL. The Extracellular segment spans residues 261 to 273; that stretch reads YCVPNPKTSSLIV. A helical transmembrane segment spans residues 274 to 294; sequence TVASVFYTVAIPMLNPLIYSL. The Cytoplasmic portion of the chain corresponds to 295–314; sequence RNKDINNMFEKLVVTKLIYH.

This sequence belongs to the G-protein coupled receptor 1 family.

It is found in the cell membrane. Odorant receptor. The protein is Olfactory receptor 5D13 (OR5D13) of Homo sapiens (Human).